The primary structure comprises 246 residues: Biosynthetic peptidoglycan transglycosylase (246 aa).

A helical membrane pass occupies residues F28–P48.

It belongs to the glycosyltransferase 51 family.

The protein localises to the cell inner membrane. It carries out the reaction [GlcNAc-(1-&gt;4)-Mur2Ac(oyl-L-Ala-gamma-D-Glu-L-Lys-D-Ala-D-Ala)](n)-di-trans,octa-cis-undecaprenyl diphosphate + beta-D-GlcNAc-(1-&gt;4)-Mur2Ac(oyl-L-Ala-gamma-D-Glu-L-Lys-D-Ala-D-Ala)-di-trans,octa-cis-undecaprenyl diphosphate = [GlcNAc-(1-&gt;4)-Mur2Ac(oyl-L-Ala-gamma-D-Glu-L-Lys-D-Ala-D-Ala)](n+1)-di-trans,octa-cis-undecaprenyl diphosphate + di-trans,octa-cis-undecaprenyl diphosphate + H(+). The protein operates within cell wall biogenesis; peptidoglycan biosynthesis. Functionally, peptidoglycan polymerase that catalyzes glycan chain elongation from lipid-linked precursors. The polypeptide is Biosynthetic peptidoglycan transglycosylase (Pasteurella multocida (strain Pm70)).